Consider the following 254-residue polypeptide: Alcohol dehydrogenase (254 aa).

10–33 (FVAGLGGIGLDTSRELVKRDLKNL) provides a ligand contact to NAD(+). S138 contacts substrate. Residue Y151 is the Proton acceptor of the active site.

Belongs to the short-chain dehydrogenases/reductases (SDR) family. In terms of assembly, homodimer.

It carries out the reaction a primary alcohol + NAD(+) = an aldehyde + NADH + H(+). The enzyme catalyses a secondary alcohol + NAD(+) = a ketone + NADH + H(+). This Drosophila subobscura (Fruit fly) protein is Alcohol dehydrogenase (Adh).